Consider the following 173-residue polypeptide: Superoxide dismutase [Cu-Zn] (173 aa).

A signal peptide spans 1–19; the sequence is MKRFSLAILALVVATGAQA. Cu cation contacts are provided by His-67, His-69, and His-92. Positions 72–113 are disordered; the sequence is GSCQPATKDGKASAAESAGGHLDPQNTGKHEGPEGAGHLGDL. A disulfide bond links Cys-74 and Cys-169. 4 residues coordinate Zn(2+): His-92, His-101, His-109, and Asp-112. His-147 serves as a coordination point for Cu cation.

It belongs to the Cu-Zn superoxide dismutase family. Monomer. Cu cation serves as cofactor. It depends on Zn(2+) as a cofactor.

Its subcellular location is the periplasm. The catalysed reaction is 2 superoxide + 2 H(+) = H2O2 + O2. Its function is as follows. Destroys radicals which are normally produced within the cells and which are toxic to biological systems. The chain is Superoxide dismutase [Cu-Zn] (sodC) from Escherichia coli O157:H7.